Here is a 190-residue protein sequence, read N- to C-terminus: Probable E3 ubiquitin-protein ligase RHB1A (190 aa).

Residues 139–180 form an RING-type; atypical zinc finger; that stretch reads CPICFEDYDVENPRLTTKCEHEFHLSCLLEWIERSDRCPICD.

The catalysed reaction is S-ubiquitinyl-[E2 ubiquitin-conjugating enzyme]-L-cysteine + [acceptor protein]-L-lysine = [E2 ubiquitin-conjugating enzyme]-L-cysteine + N(6)-ubiquitinyl-[acceptor protein]-L-lysine.. The protein operates within protein modification; protein ubiquitination. Its function is as follows. Probable E3 ubiquitin-protein ligase that may possess E3 ubiquitin ligase activity in vitro. The polypeptide is Probable E3 ubiquitin-protein ligase RHB1A (Arabidopsis thaliana (Mouse-ear cress)).